A 925-amino-acid chain; its full sequence is Bifunctional glutamine synthetase adenylyltransferase/adenylyl-removing enzyme (925 aa).

The adenylyl removase stretch occupies residues 1–426; that stretch reads MTDASDLLSL…AQFDQVFADK (426 aa). The segment at 436–925 is adenylyl transferase; sequence DQAAGCIWSG…AALWARVFGA (490 aa).

This sequence belongs to the GlnE family. It depends on Mg(2+) as a cofactor.

The enzyme catalyses [glutamine synthetase]-O(4)-(5'-adenylyl)-L-tyrosine + phosphate = [glutamine synthetase]-L-tyrosine + ADP. It carries out the reaction [glutamine synthetase]-L-tyrosine + ATP = [glutamine synthetase]-O(4)-(5'-adenylyl)-L-tyrosine + diphosphate. In terms of biological role, involved in the regulation of glutamine synthetase GlnA, a key enzyme in the process to assimilate ammonia. When cellular nitrogen levels are high, the C-terminal adenylyl transferase (AT) inactivates GlnA by covalent transfer of an adenylyl group from ATP to specific tyrosine residue of GlnA, thus reducing its activity. Conversely, when nitrogen levels are low, the N-terminal adenylyl removase (AR) activates GlnA by removing the adenylyl group by phosphorolysis, increasing its activity. The regulatory region of GlnE binds the signal transduction protein PII (GlnB) which indicates the nitrogen status of the cell. The protein is Bifunctional glutamine synthetase adenylyltransferase/adenylyl-removing enzyme of Burkholderia mallei (strain ATCC 23344).